A 506-amino-acid chain; its full sequence is Glutamate--tRNA ligase (506 aa).

The short motif at 21–31 (PSPTGTPHVGM) is the 'HIGH' region element. The 'KMSKS' region motif lies at 265-269 (KLSKR). Lys-268 provides a ligand contact to ATP.

The protein belongs to the class-I aminoacyl-tRNA synthetase family. Glutamate--tRNA ligase type 1 subfamily. As to quaternary structure, monomer.

Its subcellular location is the cytoplasm. The catalysed reaction is tRNA(Glu) + L-glutamate + ATP = L-glutamyl-tRNA(Glu) + AMP + diphosphate. In terms of biological role, catalyzes the attachment of glutamate to tRNA(Glu) in a two-step reaction: glutamate is first activated by ATP to form Glu-AMP and then transferred to the acceptor end of tRNA(Glu). This chain is Glutamate--tRNA ligase, found in Bifidobacterium longum (strain DJO10A).